Consider the following 482-residue polypeptide: FAD-linked oxidoreductase alt4 (482 aa).

Residues 53-211 enclose the FAD-binding PCMH-type domain; that stretch reads ERPTYLAIVD…LEATFQVYPQ (159 aa).

This sequence belongs to the oxygen-dependent FAD-linked oxidoreductase family. Requires FAD as cofactor.

Its pathway is secondary metabolite biosynthesis. FAD-linked oxidoreductase; part of the gene cluster that mediates the biosynthesis of alternapyrone derivatives. Alternapyrone is a decaketide with octa-methylation from methionine on every C2 unit except the third unit. All the domains in the polyketide synthase alt5 are apparently involved in alternapyrone synthesis, that is, the 8 CMeT, 7 KR, 7 DH, and 4 ER reactions in the 9 KS-mediated condensation steps required for alternapyrone synthesis. the alternapyrone produced by alt5 might be intensively modified by cytochrome P450 monooxygenases alt1, alt2 and alt3 and FAD-dependent oxidoreductase alt4 present in the alt gene cluster. This chain is FAD-linked oxidoreductase alt4, found in Alternaria solani.